The primary structure comprises 149 residues: Small ribosomal subunit protein bS6 (149 aa).

The segment at glutamate 94 to alanine 149 is disordered.

This sequence belongs to the bacterial ribosomal protein bS6 family.

Its function is as follows. Binds together with bS18 to 16S ribosomal RNA. In Sinorhizobium fredii (strain NBRC 101917 / NGR234), this protein is Small ribosomal subunit protein bS6.